Reading from the N-terminus, the 873-residue chain is Zinc fingers and homeoboxes protein 1 (873 aa).

Thr-36 is modified (phosphothreonine). Residues 41 to 63 (AKAESVSSDEEVHGSVDSDNQQN) form a disordered region. A phosphoserine mark is found at Ser-45, Ser-47, and Ser-48. The span at 50–63 (EEVHGSVDSDNQQN) shows a compositional bias: basic and acidic residues. C2H2-type zinc fingers lie at residues 70–93 (YECKYCTFQTPDLNMFTFHVDSEH) and 102–125 (YVCVECNFLTKRYDALSEHNLKYH). Lys-159 participates in a covalent cross-link: Glycyl lysine isopeptide (Lys-Gly) (interchain with G-Cter in SUMO2). The tract at residues 198-247 (VHHNSAEGTSEEKENGVKASQEENAESVSSSALESNTSTSTINRVHPSPA) is disordered. Ser-202 bears the Phosphoserine mark. Low complexity predominate over residues 223-238 (ESVSSSALESNTSTST). Positions 272 to 432 (NSNLLPKVLI…QTNVQKSQVP (161 aa)) are required for dimerization. The tract at residues 272–564 (NSNLLPKVLI…SQQKQSWNPF (293 aa)) is required for interaction with NFYA. Residues 284 to 346 (NSIPTYNAAL…LKHGVSWTPE (63 aa)) constitute a DNA-binding region (homeobox 1). Residues 429 to 456 (SQVPAAQPATDTKPATAAVPSSPSVRPE) are disordered. Residues Lys-441 and Lys-485 each participate in a glycyl lysine isopeptide (Lys-Gly) (interchain with G-Cter in SUMO2) cross-link. Residues 464–526 (SFGIRAKKTK…YNQRNSKSNQ (63 aa)) constitute a DNA-binding region (homeobox 2). Disordered stretches follow at residues 541-568 (DSSDETPEPPAAAASQQKQSWNPFPDFA), 627-668 (DEKI…CKKT), and 731-767 (SSSLNGLSSLRRRGRGRPKGRGRGRPRGRPRGGKRMN). The homeobox 3 DNA-binding region spans 569 to 630 (PQKFKEKTAE…KTKALKDEKI (62 aa)). Lys-629 is covalently cross-linked (Glycyl lysine isopeptide (Lys-Gly) (interchain with G-Cter in SUMO2)). Ser-648 bears the Phosphoserine mark. Positions 660–722 (GTGKICKKTP…YAWKNGNLKW (63 aa)) form a DNA-binding region, homeobox 4. A required for nuclear localization region spans residues 734–768 (LNGLSSLRRRGRGRPKGRGRGRPRGRPRGGKRMNT). Residues 740–764 (LRRRGRGRPKGRGRGRPRGRPRGGK) show a composition bias toward basic residues. Residue Ser-774 is modified to Phosphoserine. The homeobox 5 DNA-binding region spans 777 to 832 (KFKTGTAILKDYYLKHKFLNEQDLDELVNRSHMGYEQVREWFAERQRRSELGIELF). The disordered stretch occupies residues 829–873 (IELFEENEEEDEVVDDQEEDEEETDDSDTWEPPRHVKRKLSKSDD). Acidic residues predominate over residues 831–857 (LFEENEEEDEVVDDQEEDEEETDDSDT). Positions 831 to 873 (LFEENEEEDEVVDDQEEDEEETDDSDTWEPPRHVKRKLSKSDD) are required for repressor activity. A compositionally biased stretch (basic residues) spans 863 to 873 (HVKRKLSKSDD).

It belongs to the ZHX family. As to quaternary structure, forms homodimers. Heterodimer (via HD1 domain) with ZHX2 (via HD1 domain). Also forms a heterodimer with ZHX3 which is a prerequisite for repressor activity. Interacts with ATF7IP and NFYA. Interacts (via homeobox domains) with DNMT3B (via PWWP domain). In terms of tissue distribution, widely expressed with highest levels in brain.

It localises to the nucleus. Functionally, acts as a transcriptional repressor. Increases DNMT3B-mediated repressive transcriptional activity when DNMT3B is tethered to DNA. May link molecule between DNMT3B and other co-repressor proteins. The sequence is that of Zinc fingers and homeoboxes protein 1 (Zhx1) from Mus musculus (Mouse).